Reading from the N-terminus, the 167-residue chain is MYWRTLWGFLWLWPYLFYIQAVPIQKVQSDTKTLIKTIVTRINDISHTQSVSSKQRVTGLDFIPGLHPVLTLSQMDQTLAIYQQILINLPSRNVIQISNDLENLRDLLHLLAFSKSCHLPLASGLETLESLGDVLEASLYSTEVVALSRLQGSLQDMLWQLDLSPGC.

The first 21 residues, 1 to 21, serve as a signal peptide directing secretion; it reads MYWRTLWGFLWLWPYLFYIQA. A disulfide bridge links cysteine 117 with cysteine 167.

This sequence belongs to the leptin family.

It is found in the secreted. Its function is as follows. Key player in the regulation of energy balance and body weight control. Once released into the circulation, has central and peripheral effects by binding LEPR, found in many tissues, which results in the activation of several major signaling pathways. In the hypothalamus, acts as an appetite-regulating factor that induces a decrease in food intake and an increase in energy consumption by inducing anorexinogenic factors and suppressing orexigenic neuropeptides, also regulates bone mass and secretion of hypothalamo-pituitary-adrenal hormones. In the periphery, increases basal metabolism, influences reproductive function, regulates pancreatic beta-cell function and insulin secretion, is pro-angiogenic for endothelial cell and affects innate and adaptive immunity. In the arcuate nucleus of the hypothalamus, activates by depolarization POMC neurons inducing FOS and SOCS3 expression to release anorexigenic peptides and inhibits by hyperpolarization NPY neurons inducing SOCS3 with a consequent reduction on release of orexigenic peptides. In addition to its known satiety inducing effect, has a modulatory role in nutrient absorption. In the intestine, reduces glucose absorption by enterocytes by activating PKC and leading to a sequential activation of p38, PI3K and ERK signaling pathways which exerts an inhibitory effect on glucose absorption. Acts as a growth factor on certain tissues, through the activation of different signaling pathways increases expression of genes involved in cell cycle regulation such as CCND1, via JAK2-STAT3 pathway, or VEGFA, via MAPK1/3 and PI3K-AKT1 pathways. May also play an apoptotic role via JAK2-STAT3 pathway and up-regulation of BIRC5 expression. Pro-angiogenic, has mitogenic activity on vascular endothelial cells and plays a role in matrix remodeling by regulating the expression of matrix metalloproteinases (MMPs) and tissue inhibitors of metalloproteinases (TIMPs). In innate immunity, modulates the activity and function of neutrophils by increasing chemotaxis and the secretion of oxygen radicals. Increases phagocytosis by macrophages and enhances secretion of pro-inflammatory mediators. Increases cytotoxic ability of NK cells. Plays a pro-inflammatory role, in synergy with IL1B, by inducing NOS2 which promotes the production of IL6, IL8 and Prostaglandin E2, through a signaling pathway that involves JAK2, PI3K, MAP2K1/MEK1 and MAPK14/p38. In adaptive immunity, promotes the switch of memory T-cells towards T helper-1 cell immune responses. Increases CD4(+)CD25(-) T-cell proliferation and reduces autophagy during TCR (T-cell receptor) stimulation, through MTOR signaling pathway activation and BCL2 up-regulation. The polypeptide is Leptin (LEP) (Macaca mulatta (Rhesus macaque)).